Reading from the N-terminus, the 264-residue chain is Wtf element wtf11 (264 aa).

A compositionally biased stretch (polar residues) spans 1–12 (MNSNYVPLTSSV). The tract at residues 1–26 (MNSNYVPLTSSVDVEEKMESENGVDL) is disordered. The next 4 helical transmembrane spans lie at 107 to 127 (LLFV…VIFG), 145 to 165 (LSWF…YDFW), 180 to 200 (WKNT…GFFV), and 217 to 237 (SLFA…FETL).

Belongs to the WTF family.

Its subcellular location is the membrane. Its function is as follows. May act in meiotic drive. The protein is Wtf element wtf11 of Schizosaccharomyces pombe (strain 972 / ATCC 24843) (Fission yeast).